A 152-amino-acid polypeptide reads, in one-letter code: MTIWVDADACPNVIKEILYRAAERMQMPLVLVANQSLRVPPSRFIRTLHVAAGFDVADNEIVRQCEAGDLVITADIPLAAEAIEKGAAALNPRGERYTPATIRERLTMRDFMDTLRASGIQTGGPDSLSQRDRQAFAAELEKWWLEVQRSRG.

It belongs to the UPF0178 family.

The chain is UPF0178 protein YaiI from Shigella boydii serotype 18 (strain CDC 3083-94 / BS512).